Reading from the N-terminus, the 161-residue chain is Transcription antitermination protein NusB (161 aa).

This sequence belongs to the NusB family.

Involved in transcription antitermination. Required for transcription of ribosomal RNA (rRNA) genes. Binds specifically to the boxA antiterminator sequence of the ribosomal RNA (rrn) operons. In Syntrophus aciditrophicus (strain SB), this protein is Transcription antitermination protein NusB.